Reading from the N-terminus, the 113-residue chain is uncharacterized protein (113 aa).

This is an uncharacterized protein from Methanocaldococcus jannaschii (strain ATCC 43067 / DSM 2661 / JAL-1 / JCM 10045 / NBRC 100440) (Methanococcus jannaschii).